Here is a 360-residue protein sequence, read N- to C-terminus: Phospho-N-acetylmuramoyl-pentapeptide-transferase (360 aa).

A run of 10 helical transmembrane segments spans residues 21 to 41 (YLSFRAIVSILTALGISLWMG), 73 to 93 (TMGGVMILAAITITVLLWADL), 94 to 114 (TNPYVWAVLAVLLGYGAVGFV), 132 to 152 (WKYFWQSAIALVVAFALYAHG), 168 to 188 (VMPQLGLMYIVLTYFVIVGTS), 199 to 219 (GLAIMPTVLVAAGFAAIAWAT), 239 to 259 (LVVVCTAMVGAGLGFLWFNTY), 263 to 283 (VFMGDVGALALGGALGTIAVL), 288 to 308 (FVLVIMGGVFVMETLSVILQV), and 338 to 358 (VIVRFWIISIVLVLIGLATLK).

This sequence belongs to the glycosyltransferase 4 family. MraY subfamily. Requires Mg(2+) as cofactor.

It localises to the cell inner membrane. The enzyme catalyses UDP-N-acetyl-alpha-D-muramoyl-L-alanyl-gamma-D-glutamyl-meso-2,6-diaminopimeloyl-D-alanyl-D-alanine + di-trans,octa-cis-undecaprenyl phosphate = di-trans,octa-cis-undecaprenyl diphospho-N-acetyl-alpha-D-muramoyl-L-alanyl-D-glutamyl-meso-2,6-diaminopimeloyl-D-alanyl-D-alanine + UMP. It functions in the pathway cell wall biogenesis; peptidoglycan biosynthesis. Catalyzes the initial step of the lipid cycle reactions in the biosynthesis of the cell wall peptidoglycan: transfers peptidoglycan precursor phospho-MurNAc-pentapeptide from UDP-MurNAc-pentapeptide onto the lipid carrier undecaprenyl phosphate, yielding undecaprenyl-pyrophosphoryl-MurNAc-pentapeptide, known as lipid I. The protein is Phospho-N-acetylmuramoyl-pentapeptide-transferase of Vibrio cholerae serotype O1 (strain M66-2).